Consider the following 397-residue polypeptide: Pentatricopeptide repeat-containing protein At1g80150, mitochondrial (397 aa).

Residues 1 to 81 (MLSLRHIRRF…FAFEDTVSRL (81 aa)) constitute a mitochondrion transit peptide. PPR repeat units follow at residues 105 to 139 (REGF…GCKR), 140 to 170 (SVKS…APSK), 176 to 210 (DAVS…GLTP), 211 to 245 (DVVT…GCKP), 246 to 280 (NLTT…QVEP), 281 to 315 (DSIT…GYKP), 316 to 350 (NLKI…KWYP), and 351 to 381 (NLDT…VHRR).

This sequence belongs to the PPR family. P subfamily.

Its subcellular location is the mitochondrion. This chain is Pentatricopeptide repeat-containing protein At1g80150, mitochondrial, found in Arabidopsis thaliana (Mouse-ear cress).